The following is a 107-amino-acid chain: Acidic phospholipase A2 braziliase-I (107 aa).

7 disulfides stabilise this stretch: Cys-26–Cys-100, Cys-28–Cys-44, Cys-43–Cys-86, Cys-49–Cys-107, Cys-50–Cys-79, Cys-57–Cys-72, and Cys-66–Cys-77. Residues Tyr-27, Gly-29, and Gly-31 each contribute to the Ca(2+) site. His-47 is an active-site residue. Residue Asp-48 coordinates Ca(2+). Asp-80 is a catalytic residue.

As to quaternary structure, monomer. Ca(2+) serves as cofactor. As to expression, expressed by the venom gland.

The protein resides in the secreted. It carries out the reaction a 1,2-diacyl-sn-glycero-3-phosphocholine + H2O = a 1-acyl-sn-glycero-3-phosphocholine + a fatty acid + H(+). Its function is as follows. Snake venom phospholipase A2 (PLA2) that induces significant edematogenic activity. Shows mild cytotoxicity on Trypanosoma cruzi and Leishmania infantum. Also inhibits ADP- and collagen-induced platelet aggregation. Does not show myotoxic activity. This Bothrops brazili (Brazil's lancehead) protein is Acidic phospholipase A2 braziliase-I.